A 342-amino-acid chain; its full sequence is Probable dual-specificity RNA methyltransferase RlmN (342 aa).

The Proton acceptor role is filled by glutamate 91. Positions 97 to 327 (YKHGNSICVS…TTIRREMGAD (231 aa)) constitute a Radical SAM core domain. Cysteine 104 and cysteine 332 are disulfide-bonded. Cysteine 111, cysteine 115, and cysteine 118 together coordinate [4Fe-4S] cluster. Residues 158–159 (GE), serine 190, 213–215 (SLH), and asparagine 289 each bind S-adenosyl-L-methionine. Cysteine 332 (S-methylcysteine intermediate) is an active-site residue.

This sequence belongs to the radical SAM superfamily. RlmN family. Requires [4Fe-4S] cluster as cofactor.

The protein localises to the cytoplasm. The catalysed reaction is adenosine(2503) in 23S rRNA + 2 reduced [2Fe-2S]-[ferredoxin] + 2 S-adenosyl-L-methionine = 2-methyladenosine(2503) in 23S rRNA + 5'-deoxyadenosine + L-methionine + 2 oxidized [2Fe-2S]-[ferredoxin] + S-adenosyl-L-homocysteine. It catalyses the reaction adenosine(37) in tRNA + 2 reduced [2Fe-2S]-[ferredoxin] + 2 S-adenosyl-L-methionine = 2-methyladenosine(37) in tRNA + 5'-deoxyadenosine + L-methionine + 2 oxidized [2Fe-2S]-[ferredoxin] + S-adenosyl-L-homocysteine. Functionally, specifically methylates position 2 of adenine 2503 in 23S rRNA and position 2 of adenine 37 in tRNAs. The polypeptide is Probable dual-specificity RNA methyltransferase RlmN (Clostridium botulinum (strain Okra / Type B1)).